Reading from the N-terminus, the 544-residue chain is Probable protein kinase UbiB (544 aa).

The Protein kinase domain occupies 123 to 501; the sequence is DFDIKPLASA…KRQQAKGQFL (379 aa). Residues 129 to 137 and lysine 152 contribute to the ATP site; that span reads LASASIAQV. The active-site Proton acceptor is aspartate 287. Residues 515-537 traverse the membrane as a helical segment; that stretch reads LLTSNITVLASISAATGAAFWLF.

Belongs to the ABC1 family. UbiB subfamily.

It is found in the cell inner membrane. Its pathway is cofactor biosynthesis; ubiquinone biosynthesis [regulation]. Its function is as follows. Is probably a protein kinase regulator of UbiI activity which is involved in aerobic coenzyme Q (ubiquinone) biosynthesis. This Aliivibrio fischeri (strain MJ11) (Vibrio fischeri) protein is Probable protein kinase UbiB.